The chain runs to 350 residues: DNA polymerase IV (350 aa).

Residues 6–187 (IIHIDMDAFY…LPVEKIFGIG (182 aa)) form the UmuC domain. Positions 10 and 105 each coordinate Mg(2+). Residue Glu-106 is part of the active site.

This sequence belongs to the DNA polymerase type-Y family. As to quaternary structure, monomer. Mg(2+) is required as a cofactor.

It localises to the cytoplasm. The catalysed reaction is DNA(n) + a 2'-deoxyribonucleoside 5'-triphosphate = DNA(n+1) + diphosphate. Its function is as follows. Poorly processive, error-prone DNA polymerase involved in untargeted mutagenesis. Copies undamaged DNA at stalled replication forks, which arise in vivo from mismatched or misaligned primer ends. These misaligned primers can be extended by PolIV. Exhibits no 3'-5' exonuclease (proofreading) activity. May be involved in translesional synthesis, in conjunction with the beta clamp from PolIII. The polypeptide is DNA polymerase IV (Protochlamydia amoebophila (strain UWE25)).